A 156-amino-acid chain; its full sequence is Cyanate hydratase (156 aa).

Residues R96, E99, and S122 contribute to the active site.

It belongs to the cyanase family.

It carries out the reaction cyanate + hydrogencarbonate + 3 H(+) = NH4(+) + 2 CO2. Functionally, catalyzes the reaction of cyanate with bicarbonate to produce ammonia and carbon dioxide. The polypeptide is Cyanate hydratase (Burkholderia vietnamiensis (strain G4 / LMG 22486) (Burkholderia cepacia (strain R1808))).